Consider the following 148-residue polypeptide: TEFSADQIEDFKEAFGLFDRIGDSQVAFNQVADIMRALGQNPTNKDVTKILGNPSADDMANKRLNFDAFLPMLKEVDALPKGTYDDYVEGLRVFDKEGNGTVMGAELRIVLSTLGEKMTEPEIDALMAGQEDEGSVHYEAFVKHIMSV.

An N-acetylthreonine modification is found at Thr-1. 2 consecutive EF-hand domains span residues 6–41 (DQIE…LGQN) and 82–117 (GTYD…LGEK).

In terms of assembly, myosin is a hexamer of 2 heavy chains and 4 light chains.

The sequence is that of Myosin light chain 3, skeletal muscle isoform from Chelon ramada (Thin-lipped grey mullet).